Here is a 394-residue protein sequence, read N- to C-terminus: Elongation factor Tu (394 aa).

Positions 10–205 constitute a tr-type G domain; it reads KPHMNVGTIG…TMDSYFDLPE (196 aa). The tract at residues 19–26 is G1; the sequence is GHVDHGKT. 19–26 contacts GTP; sequence GHVDHGKT. Residue threonine 26 coordinates Mg(2+). Positions 61 to 65 are G2; sequence GITIN. Positions 82–85 are G3; it reads DCPG. GTP-binding positions include 82-86 and 137-140; these read DCPGH and NKLD. The segment at 137–140 is G4; sequence NKLD. Residues 173–175 are G5; it reads SAF.

The protein belongs to the TRAFAC class translation factor GTPase superfamily. Classic translation factor GTPase family. EF-Tu/EF-1A subfamily. Monomer.

It is found in the cytoplasm. The enzyme catalyses GTP + H2O = GDP + phosphate + H(+). Its function is as follows. GTP hydrolase that promotes the GTP-dependent binding of aminoacyl-tRNA to the A-site of ribosomes during protein biosynthesis. This is Elongation factor Tu from Borrelia hermsii (strain HS1 / DAH).